A 113-amino-acid chain; its full sequence is Type III endosome membrane protein TEMP (113 aa).

The segment at 1-22 is disordered; it reads MNETNKTLVGPSELPTASAVAP. Topologically, residues 1-29 are extracellular; the sequence is MNETNKTLVGPSELPTASAVAPGPGTGAR. Asn5 is a glycosylation site (N-linked (GlcNAc...) asparagine). A helical; Signal-anchor for type III membrane protein transmembrane segment spans residues 30–50; it reads AWPVLVGFVLGAVVLSLLIAL. Residues 51-113 lie on the Cytoplasmic side of the membrane; the sequence is AAKCHLCRRY…TEGSRDHFSL (63 aa). Residues 66–113 form a disordered region; sequence HRPLPETGRGGRPQVAEDEDDDGFIEDNYIQPGTGELGTEGSRDHFSL. The span at 81 to 90 shows a compositional bias: acidic residues; sequence AEDEDDDGFI.

It is found in the membrane. The protein localises to the early endosome. Its subcellular location is the recycling endosome. It localises to the cell membrane. Functionally, may be involved in membrane trafficking between endosomes and plasma membrane. The sequence is that of Type III endosome membrane protein TEMP (C1orf210) from Homo sapiens (Human).